Here is a 224-residue protein sequence, read N- to C-terminus: Oxalate oxidase 2 (224 aa).

Residues 1 to 23 (MGYSKTLAVSLFAVLLLAPAVLA) form the signal peptide. Cys-33 and Cys-49 are disulfide-bonded. In terms of domain architecture, Cupin type-1 spans 63–214 (SKLAKAGNTS…ALRVEAGVVE (152 aa)). N-linked (GlcNAc...) asparagine glycans are attached at residues Asn-70 and Asn-75. 4 residues coordinate Mn(2+): His-111, His-113, Glu-118, and His-160.

Belongs to the germin family. As to quaternary structure, oligomer (believed to be a pentamer but probably hexamer). In terms of processing, glycosylated. A form called G contains antennary GlcNAc residues, whereas a form called G' lacks antennary GlcNAc residues in its otherwise identical glycans. Root.

Its subcellular location is the secreted. The protein resides in the extracellular space. The protein localises to the apoplast. It localises to the cell wall. It carries out the reaction oxalate + O2 + 2 H(+) = H2O2 + 2 CO2. Its function is as follows. Releases hydrogen peroxide in the apoplast. May play an important role in several aspects of plant growth and defense mechanisms. This is Oxalate oxidase 2 from Hordeum vulgare (Barley).